A 562-amino-acid chain; its full sequence is Thermosome subunit alpha (562 aa).

2 disordered regions span residues 1 to 23 (MAQQ…TSGE) and 526 to 551 (GGQV…GMGG). A compositionally biased stretch (gly residues) spans 537–551 (GPAGGPGGMGGGMGG).

The protein belongs to the TCP-1 chaperonin family. As to quaternary structure, forms an oligomeric complex of eight-membered rings.

Molecular chaperone; binds unfolded polypeptides in vitro, and has a weak ATPase activity. This Halobacterium salinarum (strain ATCC 700922 / JCM 11081 / NRC-1) (Halobacterium halobium) protein is Thermosome subunit alpha (thsA).